A 353-amino-acid polypeptide reads, in one-letter code: tRNA N6-adenosine threonylcarbamoyltransferase (353 aa).

H111 and H115 together coordinate Fe cation. Substrate-binding positions include 134-138 (LVSGG), D167, G180, D184, and N279. D307 is a Fe cation binding site.

Belongs to the KAE1 / TsaD family. The cofactor is Fe(2+).

It localises to the cytoplasm. It carries out the reaction L-threonylcarbamoyladenylate + adenosine(37) in tRNA = N(6)-L-threonylcarbamoyladenosine(37) in tRNA + AMP + H(+). Its function is as follows. Required for the formation of a threonylcarbamoyl group on adenosine at position 37 (t(6)A37) in tRNAs that read codons beginning with adenine. Is involved in the transfer of the threonylcarbamoyl moiety of threonylcarbamoyl-AMP (TC-AMP) to the N6 group of A37, together with TsaE and TsaB. TsaD likely plays a direct catalytic role in this reaction. This is tRNA N6-adenosine threonylcarbamoyltransferase from Thermosynechococcus vestitus (strain NIES-2133 / IAM M-273 / BP-1).